We begin with the raw amino-acid sequence, 273 residues long: DNA repair protein RecO (273 aa).

Residues 250–273 (NVGQNPSGKDDLNERRDVDGTGES) are disordered. Residues 257–273 (GKDDLNERRDVDGTGES) are compositionally biased toward basic and acidic residues.

It belongs to the RecO family.

Its function is as follows. Involved in DNA repair and RecF pathway recombination. In Desulfitobacterium hafniense (strain Y51), this protein is DNA repair protein RecO.